A 178-amino-acid chain; its full sequence is Probetacellulin (178 aa).

The first 31 residues, 1–31, serve as a signal peptide directing secretion; sequence MARAAPGSGASPLPLLPALALGLVILHCVVA. Residues 32 to 118 lie on the Extracellular side of the membrane; sequence DGNSTRSPED…LFYLRGDRGQ (87 aa). Asn34 carries N-linked (GlcNAc...) asparagine glycosylation. Positions 65 to 105 constitute an EGF-like domain; that stretch reads HFSRCPKQYKHYCIKGRCRFVVAEQTPSCVCDEGYAGARCE. 3 disulfides stabilise this stretch: Cys69-Cys82, Cys77-Cys93, and Cys95-Cys104. A propeptide spans 112 to 178 (removed in mature form); the sequence is LRGDRGQILV…NDDIQETSIA (67 aa). The chain crosses the membrane as a helical span at residues 119–139; that stretch reads ILVICLIAVMVIFIILVVSIC. Residues 140 to 178 are Cytoplasmic-facing; sequence TCCHPLRKRRKRRKKEEEMETLGKDITPINDDIQETSIA.

In terms of assembly, monomer. Interacts with EGFR and ERBB4. In terms of tissue distribution, expressed in a wide range of tissues, including the mammary gland.

It localises to the secreted. The protein resides in the extracellular space. The protein localises to the cell membrane. In terms of biological role, growth factor that binds to EGFR, ERBB4 and other EGF receptor family members. Potent mitogen for retinal pigment epithelial cells and vascular smooth muscle cells. The chain is Probetacellulin (BTC) from Bos taurus (Bovine).